Here is a 1389-residue protein sequence, read N- to C-terminus: Superkiller protein 3 (1389 aa).

3 TPR repeats span residues 2-35 (AKPA…DANN), 36-69 (YNAN…DEKA), and 90-123 (HKIT…VKKY). The interval 326–355 (SNNSAELAKETKEEDDSENSVDKKENEEDI) is disordered. 15 TPR repeats span residues 381 to 414 (TIIS…LKRL), 429 to 463 (FQLC…DPRN), 465 to 497 (HALL…HEND), 498 to 530 (PSLS…LLSM), 538 to 574 (AEAY…DPNY), 575 to 608 (APAY…DASQ), 650 to 683 (NWHH…SPKD), 684 to 717 (TNAW…DPDD), 719 to 751 (YVKY…RSKE), 759 to 792 (AETY…CCNV), 931 to 963 (VFWN…NERS), 964 to 997 (SGVW…DPDN), 999 to 1031 (QAWL…SSGK), 1124 to 1157 (IDAK…LEGE), and 1167 to 1200 (LGLN…SDSN).

As to quaternary structure, component of the SKI complex composed of at least ski2, ski3 and ski8. The SKI complex interacts with ski7, which makes the link between the SKI complex and the exosome in order to perform mRNA degradation.

Its subcellular location is the cytoplasm. In terms of biological role, component of the SKI complex involved in 3'-mRNA degradation pathway. In Schizosaccharomyces pombe (strain 972 / ATCC 24843) (Fission yeast), this protein is Superkiller protein 3 (ski3).